The sequence spans 307 residues: MSQLSVKHLLGIKDLTTKDIELILETAGQFKEVINRPIKKVPSLRDVTIANVFFENSTRTRLSFELAQKRLSADTINFSAAASSVKKGETLLDTVNNILAMKVDMIVMRHASVGAPHFLAKHISANIVNAGDGTHEHPTQALLDSFSIKEKLGGVAGKKVCIFGDILHSRVALSNIFALQKQGAEVMVCGPSTLIPKFIGELGVKVEFDLRKALQWCDVANVLRIQLERQTIKYFPTLREYAQYYGINKQLLDSLNKEIVIMHPGPINRGVELSSDVADSGHSIILDQVENGVAVRMAVLYLLAGNK.

Carbamoyl phosphate-binding residues include arginine 59 and threonine 60. Lysine 87 is a binding site for L-aspartate. 3 residues coordinate carbamoyl phosphate: arginine 109, histidine 137, and glutamine 140. Arginine 170 and arginine 224 together coordinate L-aspartate. Positions 265 and 266 each coordinate carbamoyl phosphate.

The protein belongs to the aspartate/ornithine carbamoyltransferase superfamily. ATCase family. Heterododecamer (2C3:3R2) of six catalytic PyrB chains organized as two trimers (C3), and six regulatory PyrI chains organized as three dimers (R2).

The enzyme catalyses carbamoyl phosphate + L-aspartate = N-carbamoyl-L-aspartate + phosphate + H(+). The protein operates within pyrimidine metabolism; UMP biosynthesis via de novo pathway; (S)-dihydroorotate from bicarbonate: step 2/3. Functionally, catalyzes the condensation of carbamoyl phosphate and aspartate to form carbamoyl aspartate and inorganic phosphate, the committed step in the de novo pyrimidine nucleotide biosynthesis pathway. The chain is Aspartate carbamoyltransferase catalytic subunit from Cytophaga hutchinsonii (strain ATCC 33406 / DSM 1761 / CIP 103989 / NBRC 15051 / NCIMB 9469 / D465).